The chain runs to 341 residues: MGGKKIKIGINGFGRIGRLVARVALQRDDVELVAVNDPFITTDYMTYMFKYDSVHGQWKHHELKVKDSKTLLFGEKPVTVFGVRNPEEIPWGETGAEFVVESTGVFTDKDKAAAHLKGGAKKVIISAPSKDAPMFVVGVNEHEYKSNIDIVSNASCTTNCLAPLAKVINDKFGIVEGLMTTVHSITATQKTVDGPSSKDWRGGRAAGFNIIPSSTGAAKAVGKVLPALNGKLTGMAFRVPTVDVSVVDLTVRLEKAASYEEIKAVIKAESEGKLKGILGYTEEDVVSTDFIGDNRSSIFDAKAGIALNEHFVKLVSWYDNEWGYSSRVIDLILIVHMASCQ.

Residues 15 to 16 (RI), D37, and R84 each bind NAD(+). D-glyceraldehyde 3-phosphate is bound by residues 155–157 (SCT), T186, 215–216 (TG), and R238. The active-site Nucleophile is C156. N320 is a binding site for NAD(+).

The protein belongs to the glyceraldehyde-3-phosphate dehydrogenase family. Homotetramer.

Its subcellular location is the cytoplasm. It carries out the reaction D-glyceraldehyde 3-phosphate + phosphate + NAD(+) = (2R)-3-phospho-glyceroyl phosphate + NADH + H(+). It participates in carbohydrate degradation; glycolysis; pyruvate from D-glyceraldehyde 3-phosphate: step 1/5. In terms of biological role, key enzyme in glycolysis that catalyzes the first step of the pathway by converting D-glyceraldehyde 3-phosphate (G3P) into 3-phospho-D-glyceroyl phosphate. Essential for the maintenance of cellular ATP levels and carbohydrate metabolism. This chain is Glyceraldehyde-3-phosphate dehydrogenase, cytosolic (GAPC), found in Magnolia liliiflora (Mulan magnolia).